Consider the following 37-residue polypeptide: Gene 40 protein (37 aa).

The sequence is that of Gene 40 protein (40) from Mycobacterium phage L5 (Mycobacteriophage L5).